Consider the following 637-residue polypeptide: Biosynthetic arginine decarboxylase (637 aa).

Lys101 is subject to N6-(pyridoxal phosphate)lysine. Residue 286 to 296 coordinates substrate; it reads FDVGGGLAVDY.

This sequence belongs to the Orn/Lys/Arg decarboxylase class-II family. SpeA subfamily. The cofactor is Mg(2+). Pyridoxal 5'-phosphate serves as cofactor.

It carries out the reaction L-arginine + H(+) = agmatine + CO2. It functions in the pathway amine and polyamine biosynthesis; agmatine biosynthesis; agmatine from L-arginine: step 1/1. Its function is as follows. Catalyzes the biosynthesis of agmatine from arginine. The chain is Biosynthetic arginine decarboxylase from Shewanella baltica (strain OS223).